The following is a 63-amino-acid chain: Beta-insect depressant toxin Im-3 (63 aa).

Residues 1–63 enclose the LCN-type CS-alpha/beta domain; it reads KEGYGVGKDG…KVWESSTNTC (63 aa). 4 disulfides stabilise this stretch: C11–C63, C15–C37, C22–C44, and C26–C46.

Belongs to the long (4 C-C) scorpion toxin superfamily. Sodium channel inhibitor family. Beta subfamily. As to expression, expressed by the venom gland.

The protein localises to the secreted. In terms of biological role, beta toxins bind voltage-independently at site-4 of sodium channels (Nav) and shift the voltage of activation toward more negative potentials thereby affecting sodium channel activation and promoting spontaneous and repetitive firing. Induces paralysis in cricket A.domestica but does not induce death. The protein is Beta-insect depressant toxin Im-3 of Isometrus maculatus (Lesser brown scorpion).